The sequence spans 313 residues: Ribose-phosphate pyrophosphokinase (313 aa).

ATP-binding positions include Asp37–Glu39 and Arg96–Gln97. The Mg(2+) site is built by His131 and Asp170. Lys193 is an active-site residue. D-ribose 5-phosphate-binding positions include Arg195, Asp219, and Asp223 to Thr227.

The protein belongs to the ribose-phosphate pyrophosphokinase family. Class I subfamily. In terms of assembly, homohexamer. Mg(2+) is required as a cofactor.

Its subcellular location is the cytoplasm. It catalyses the reaction D-ribose 5-phosphate + ATP = 5-phospho-alpha-D-ribose 1-diphosphate + AMP + H(+). It participates in metabolic intermediate biosynthesis; 5-phospho-alpha-D-ribose 1-diphosphate biosynthesis; 5-phospho-alpha-D-ribose 1-diphosphate from D-ribose 5-phosphate (route I): step 1/1. In terms of biological role, involved in the biosynthesis of the central metabolite phospho-alpha-D-ribosyl-1-pyrophosphate (PRPP) via the transfer of pyrophosphoryl group from ATP to 1-hydroxyl of ribose-5-phosphate (Rib-5-P). This chain is Ribose-phosphate pyrophosphokinase, found in Pseudomonas syringae pv. tomato (strain ATCC BAA-871 / DC3000).